An 88-amino-acid polypeptide reads, in one-letter code: Small ribosomal subunit protein bS20 (88 aa).

Residues 1–20 (MANHKSAEKRARQTIKRTER) are disordered.

This sequence belongs to the bacterial ribosomal protein bS20 family.

Binds directly to 16S ribosomal RNA. In Campylobacter fetus subsp. fetus (strain 82-40), this protein is Small ribosomal subunit protein bS20.